The primary structure comprises 883 residues: DNA double-strand break repair Rad50 ATPase (883 aa).

ATP contacts are provided by residues lysine 12, asparagine 32–serine 38, and glutamine 137. The stretch at glutamate 244–aspartate 283 forms a coiled coil. 2 disordered regions span residues glutamate 271–aspartate 290 and aspartate 305–valine 326. The segment covering serine 313 to valine 326 has biased composition (basic and acidic residues). 2 coiled-coil regions span residues alanine 336–leucine 389 and leucine 414–glycine 452. The Zinc-hook domain occupies phenylalanine 407–alanine 506. Zn(2+)-binding residues include cysteine 454 and cysteine 457. A disordered region spans residues glutamate 508 to aspartate 565. Coiled-coil stretches lie at residues arginine 571–alanine 604 and lysine 668–leucine 720.

This sequence belongs to the SMC family. RAD50 subfamily. As to quaternary structure, homodimer. Forms a heterotetramer composed of two Mre11 subunits and two Rad50 subunits. It depends on Zn(2+) as a cofactor.

Functionally, part of the Rad50/Mre11 complex, which is involved in the early steps of DNA double-strand break (DSB) repair. Rad50 controls the balance between DNA end bridging and DNA resection via ATP-dependent structural rearrangements of the Rad50/Mre11 complex. In Halobacterium salinarum (strain ATCC 700922 / JCM 11081 / NRC-1) (Halobacterium halobium), this protein is DNA double-strand break repair Rad50 ATPase.